We begin with the raw amino-acid sequence, 291 residues long: Protein SpdB (291 aa).

Helical transmembrane passes span 24 to 44 (VVVIVMWLGEAMPWAVALVVG), 71 to 91 (ITGVGWGFGAVATGVLVAHAL), and 99 to 119 (WLAVAWLPLAAKALWLVHGLW).

The protein localises to the cell membrane. In terms of biological role, involved in plasmid transfer. The chain is Protein SpdB (spdB) from Streptomyces lividans.